The sequence spans 851 residues: DNA mismatch repair protein MutS (851 aa).

602 to 609 lines the ATP pocket; sequence GPNMSGKS.

The protein belongs to the DNA mismatch repair MutS family.

Functionally, this protein is involved in the repair of mismatches in DNA. It is possible that it carries out the mismatch recognition step. This protein has a weak ATPase activity. The sequence is that of DNA mismatch repair protein MutS from Streptococcus pyogenes serotype M28 (strain MGAS6180).